The chain runs to 515 residues: 2,3-bisphosphoglycerate-independent phosphoglycerate mutase (515 aa).

Positions 14 and 64 each coordinate Mn(2+). Catalysis depends on Ser-64, which acts as the Phosphoserine intermediate. Residues His-125, 155 to 156, Arg-187, Arg-193, 263 to 266, and Lys-337 contribute to the substrate site; these read RD and RADR. The Mn(2+) site is built by Asp-404, His-408, Asp-445, His-446, and His-464.

The protein belongs to the BPG-independent phosphoglycerate mutase family. As to quaternary structure, monomer. Mn(2+) is required as a cofactor.

The enzyme catalyses (2R)-2-phosphoglycerate = (2R)-3-phosphoglycerate. The protein operates within carbohydrate degradation; glycolysis; pyruvate from D-glyceraldehyde 3-phosphate: step 3/5. Catalyzes the interconversion of 2-phosphoglycerate and 3-phosphoglycerate. This Cronobacter sakazakii (strain ATCC BAA-894) (Enterobacter sakazakii) protein is 2,3-bisphosphoglycerate-independent phosphoglycerate mutase.